The chain runs to 296 residues: Sulfotransferase 1E1 (296 aa).

49–54 is a 3'-phosphoadenylyl sulfate binding site; it reads KSGTTW. 107–109 contacts substrate; the sequence is KTH. The active-site Proton acceptor is histidine 109. 3'-phosphoadenylyl sulfate contacts are provided by residues arginine 131, serine 139, tyrosine 194, 228–233, and 258–260; these read TSFQEM and RKG.

This sequence belongs to the sulfotransferase 1 family. As to quaternary structure, homodimer. Post-translationally, the N-terminus is blocked. As to expression, adrenal gland and much less in liver. Detectable only during pregnancy in uterine.

It localises to the cytoplasm. Its subcellular location is the cytosol. The catalysed reaction is estrone + 3'-phosphoadenylyl sulfate = estrone 3-sulfate + adenosine 3',5'-bisphosphate + H(+). The enzyme catalyses (24S)-hydroxycholesterol + 3'-phosphoadenylyl sulfate = (24S)-hydroxycholesterol 3-sulfate + adenosine 3',5'-bisphosphate + H(+). It catalyses the reaction 17beta-estradiol + 3'-phosphoadenylyl sulfate = 17beta-estradiol 3-sulfate + adenosine 3',5'-bisphosphate + H(+). It carries out the reaction 3beta-hydroxyandrost-5-en-17-one + 3'-phosphoadenylyl sulfate = dehydroepiandrosterone 3-sulfate + adenosine 3',5'-bisphosphate + H(+). The catalysed reaction is 4-ethylphenol + 3'-phosphoadenylyl sulfate = 4-ethylphenyl sulfate + adenosine 3',5'-bisphosphate + H(+). With respect to regulation, inhibited by estradiol. Its function is as follows. Sulfotransferase that utilizes 3'-phospho-5'-adenylyl sulfate (PAPS) as sulfonate donor to catalyze the sulfate conjugation of estradiol and estrone. Is a key enzyme in estrogen homeostasis, the sulfation of estrogens leads to their inactivation. Also sulfates dehydroepiandrosterone (DHEA), pregnenolone, (24S)-hydroxycholesteroland xenobiotic compounds like ethinylestradiol, equalenin, diethyl stilbesterol and 1-naphthol at significantly lower efficiency. Does not sulfonate cortisol, testosterone and dopamine. May play a role in gut microbiota-host metabolic interaction. O-sulfonates 4-ethylphenol (4-EP), a dietary tyrosine-derived metabolite produced by gut bacteria. The product 4-EPS crosses the blood-brain barrier and may negatively regulate oligodendrocyte maturation and myelination, affecting the functional connectivity of different brain regions associated with the limbic system. This is Sulfotransferase 1E1 (SULT1E1) from Cavia porcellus (Guinea pig).